The following is a 476-amino-acid chain: Glycogen synthase (476 aa).

Lys-15 provides a ligand contact to ADP-alpha-D-glucose.

The protein belongs to the glycosyltransferase 1 family. Bacterial/plant glycogen synthase subfamily.

It catalyses the reaction [(1-&gt;4)-alpha-D-glucosyl](n) + ADP-alpha-D-glucose = [(1-&gt;4)-alpha-D-glucosyl](n+1) + ADP + H(+). It participates in glycan biosynthesis; glycogen biosynthesis. Its function is as follows. Synthesizes alpha-1,4-glucan chains using ADP-glucose. The polypeptide is Glycogen synthase (Bacillus cereus (strain ZK / E33L)).